The following is a 279-amino-acid chain: Tryptophan synthase alpha chain (279 aa).

Residues E50 and D61 each act as proton acceptor in the active site.

The protein belongs to the TrpA family. As to quaternary structure, tetramer of two alpha and two beta chains.

It catalyses the reaction (1S,2R)-1-C-(indol-3-yl)glycerol 3-phosphate + L-serine = D-glyceraldehyde 3-phosphate + L-tryptophan + H2O. It functions in the pathway amino-acid biosynthesis; L-tryptophan biosynthesis; L-tryptophan from chorismate: step 5/5. In terms of biological role, the alpha subunit is responsible for the aldol cleavage of indoleglycerol phosphate to indole and glyceraldehyde 3-phosphate. In Sinorhizobium medicae (strain WSM419) (Ensifer medicae), this protein is Tryptophan synthase alpha chain.